The sequence spans 370 residues: Ubiquinone biosynthesis O-methyltransferase, mitochondrial (370 aa).

A mitochondrion-targeting transit peptide spans 1 to 86 (MWRGGRLGSR…TYRTPWKRLY (86 aa)). An S-adenosyl-L-methionine-binding site is contributed by Arg125. An N6-acetyllysine mark is found at Lys144 and Lys150. Residues Gly155 and Asp176 each coordinate S-adenosyl-L-methionine. Lys197 bears the N6-acetyllysine mark. Ser223 contributes to the S-adenosyl-L-methionine binding site. Positions 224, 227, and 228 each coordinate Mg(2+). The segment at 336–370 (AQEHQEPAESALKGETGALHANTSGSPSVREEQRT) is disordered.

Belongs to the class I-like SAM-binding methyltransferase superfamily. UbiG/COQ3 family. Component of a multi-subunit COQ enzyme complex, composed of at least COQ3, COQ4, COQ5, COQ6, COQ7 and COQ9. Requires Mg(2+) as cofactor.

Its subcellular location is the mitochondrion inner membrane. The enzyme catalyses 3,4-dihydroxy-5-(all-trans-decaprenyl)benzoate + S-adenosyl-L-methionine = 4-hydroxy-3-methoxy-5-(all-trans-decaprenyl)benzoate + S-adenosyl-L-homocysteine + H(+). It carries out the reaction a 3-demethylubiquinone + S-adenosyl-L-methionine = a ubiquinone + S-adenosyl-L-homocysteine. It catalyses the reaction 3-demethylubiquinol-10 + S-adenosyl-L-methionine = ubiquinol-10 + S-adenosyl-L-homocysteine + H(+). The protein operates within cofactor biosynthesis; ubiquinone biosynthesis. O-methyltransferase required for two non-consecutive steps during ubiquinone biosynthesis. Catalyzes the 2 O-methylation of 3,4-dihydroxy-5-(all-trans-decaprenyl)benzoic acid into 4-hydroxy-3-methoxy-5-(all-trans-decaprenyl)benzoic acid. Also catalyzes the last step of ubiquinone biosynthesis by mediating methylation of 3-demethylubiquinone into ubiquinone. Also able to mediate the methylation of 3-demethylubiquinol-10 into ubiquinol-10. The sequence is that of Ubiquinone biosynthesis O-methyltransferase, mitochondrial from Mus musculus (Mouse).